The primary structure comprises 257 residues: uncharacterized protein (257 aa).

Residues serine 122 and histidine 236 each act as charge relay system in the active site.

This sequence belongs to the peptidase S9B family.

This is an uncharacterized protein from Bacillus subtilis (strain 168).